Here is a 398-residue protein sequence, read N- to C-terminus: MKDRVVLAYSGGLDTTVAISWIAKERNAEVVCVSIDLGQGGEDMETVRQRALGAGAVESIVVDARDEFANDYCLPTIKANGMYMKEYPLVSAISRPLIVKHMADAAKEHGGTAVAHGCTGKGNDQVRFEVGFANTAPDLEIIAPVRDYAWTREKAIAFAEENGIPIEQSKSSPFSIDQNVWGRAVETGFLEDLWNAPTKDVYAYTEDPGLGQAPDEVIISFESGVPVAIDGKKVTVLEAIEELNRRAGAQGVGRLDMVEDRLVGIKSREIYEAPGAITLIRAHEALEAVTVERELARYKRGIDAEWSNQVYDGLWFSPLKRSLDAFIDSTQAHVTGDIRLVLHAGSITVNGRRSGKSLYDFNLATYDEGDSFDQSMARGFVELHGLSSKIAAKRDLAN.

8-16 (AYSGGLDTT) provides a ligand contact to ATP. Tyrosine 87 is an L-citrulline binding site. Glycine 117 serves as a coordination point for ATP. Residues threonine 119, asparagine 123, and aspartate 124 each contribute to the L-aspartate site. Position 123 (asparagine 123) interacts with L-citrulline. L-citrulline is bound by residues arginine 127, serine 175, glutamate 259, and tyrosine 271.

It belongs to the argininosuccinate synthase family. Type 1 subfamily. Homotetramer.

The protein localises to the cytoplasm. The catalysed reaction is L-citrulline + L-aspartate + ATP = 2-(N(omega)-L-arginino)succinate + AMP + diphosphate + H(+). The protein operates within amino-acid biosynthesis; L-arginine biosynthesis; L-arginine from L-ornithine and carbamoyl phosphate: step 2/3. The protein is Argininosuccinate synthase of Corynebacterium jeikeium (strain K411).